The primary structure comprises 502 residues: Glutamate--tRNA ligase (502 aa).

Positions 12 to 22 (PSPTGYLHVGG) match the 'HIGH' region motif. The 'KMSKS' region signature appears at 259–263 (KLSKR). Lys-262 lines the ATP pocket.

This sequence belongs to the class-I aminoacyl-tRNA synthetase family. Glutamate--tRNA ligase type 1 subfamily. As to quaternary structure, monomer.

Its subcellular location is the cytoplasm. It carries out the reaction tRNA(Glu) + L-glutamate + ATP = L-glutamyl-tRNA(Glu) + AMP + diphosphate. Functionally, catalyzes the attachment of glutamate to tRNA(Glu) in a two-step reaction: glutamate is first activated by ATP to form Glu-AMP and then transferred to the acceptor end of tRNA(Glu). This chain is Glutamate--tRNA ligase, found in Chlorobium phaeobacteroides (strain DSM 266 / SMG 266 / 2430).